A 116-amino-acid polypeptide reads, in one-letter code: Spermadhesin Z13 (116 aa).

Cystine bridges form between Cys-14/Cys-35 and Cys-58/Cys-79. The 102-residue stretch at 14–115 (CGDLYGEEYG…PDFFLIFRRV (102 aa)) folds into the CUB domain.

Belongs to the spermadhesin family. Homodimer; disulfide-linked. Seminal plasma.

It localises to the secreted. Its function is as follows. May be involved in the fertilization process. The protein is Spermadhesin Z13 of Bos taurus (Bovine).